Consider the following 111-residue polypeptide: Guanylate cyclase activator 2B (111 aa).

A signal peptide spans methionine 1–serine 26. Positions valine 27–aspartate 96 are excised as a propeptide. 3 cysteine pairs are disulfide-bonded: cysteine 67-cysteine 80, cysteine 100-cysteine 108, and cysteine 103-cysteine 111.

It belongs to the guanylin family.

Its subcellular location is the secreted. Endogenous activator of intestinal guanylate cyclase. It stimulates this enzyme through the same receptor binding region as the heat-stable enterotoxins. May be a potent physiological regulator of intestinal fluid and electrolyte transport. May be an autocrine/paracrine regulator of intestinal salt and water transport. This chain is Guanylate cyclase activator 2B (GUCA2B), found in Cavia porcellus (Guinea pig).